The sequence spans 172 residues: Gamma-crystallin-4 (172 aa).

Beta/gamma crystallin 'Greek key' domains are found at residues 1–37 (IFFYEERNFQGRCYECSSECSDLSSYFNRCNSIRVES) and 38–80 (GNWI…RFIP). Residues 81–85 (HPHSQ) are connecting peptide. 2 consecutive Beta/gamma crystallin 'Greek key' domains span residues 86–126 (YKMR…NVSD) and 127–169 (GHWM…RRVH).

It belongs to the beta/gamma-crystallin family. As to quaternary structure, monomer.

Functionally, crystallins are the dominant structural components of the vertebrate eye lens. The protein is Gamma-crystallin-4 (cryg4) of Xenopus laevis (African clawed frog).